The chain runs to 1214 residues: MRSRNQGGESSSNGHVSCPKPSIISSDGGKGPSEDAKKNKANRKGEDDVMASGTVKRHLKPSGESEKKTKKPLELSKEDLIQLLSIMEGELQAREDVIHMLKTEKTKPEVLEAHYGSAEPEKVLRVLHRDAILAQEKSIGEDVYEKPISELDRLEEKQKETYRRMLEQLLLAEKCHRRTVYELENEKHKHTDYMNKSDDFTNLLEQERERLKKLLEQEKAYQARKEKENAKRLNKLRDELVKLKSFALMLVDERQMHIEQLGLQSQKVQDLTQKLREEEEKLKAITYKSKEDRQKLLKLEVDFEHKASRFSQEHEEMNAKLANQESHNRQLRLKLVGLSQRIEELEETNKSLQKAEEELQELRDKIAKGECGNSSLMAEVESLRKRVLEMEGKDEEITKTEAQCRELKKKLQEEEHHSKELRLEVEKLQKRMSELEKLEEAFSRSKSECTQLHLNLEKEKNLTKDLLNELEVVKSRVKELECSESRLEKVELSLKDDLTKLKSFTVMLVDERKNMMEKIKQEERKVDGLNKNFKVEQGKVMDVTEKLIEESKKLLKLKSEMEEKVYSLTKERDELMGKLRSEEERSCELSCSVDLLKKRLDGIEEVEREINRGRLCKGSEFTCPEDNKIRELTLEIERLKKRLQQLEVVEGDLMKTEDEYDQLEQKFRTEQDKANFLSQQLEEIKHQMAKNKAIEKGEAVSQEAELRHRFRMEEAKSRDLQAEVQALKEKIHELMNKEDQLSQLQVDYSVLQQRFMEEETKNKNMGREVLNLTKELELSKRYSRALRPSGNGRRMVDVPVASTGVQTEAVCGDAAEEETPAVFIRKSFQEENHIMSNLRQVGLKKPMERSSVLDRYPPAANELTMRKSWIPWMRKRENGPSAPQEKGPRPNQGTGHPGELVLAPKQGQPLHIRVTPDHENSTATLEITSPTSEEFFSSTTVIPTLGNQKPRITIIPSPNVMSQKPKSADPTLGPERAMSPVTITTISREKSPEGGRGAFADRPASPIQIMTVSTSAAPPEIAVSPDSQEVPMGRTILKVTPEKQTVPTPMRKYNANANIITTEDNKIHIHLGSQFKRSPGPAAAEGVSPVITVRPVNVTAEKEVSTGTVLRSPRNHLSSRPGANKVTSTITITPVTTSSTRGTQSVSGQDGSSQRPTPTRIPMSKGMKAGKPVVAAPGAGNLTKFQPRAETQSMKIELKKSAASSTASLGGGKG.

Residues 1–15 (MRSRNQGGESSSNGH) show a composition bias toward polar residues. The segment at 1–73 (MRSRNQGGES…ESEKKTKKPL (73 aa)) is disordered. Basic and acidic residues-rich tracts occupy residues 32–47 (PSED…KGED) and 61–73 (PSGE…KKPL). A Phosphoserine modification is found at Ser-138. Coiled-coil stretches lie at residues 192 to 581 (DYMN…KLRS) and 624 to 778 (PEDN…ELEL). Disordered stretches follow at residues 875–898 (KREN…GHPG) and 949–976 (KPRI…GPER). Position 979 is a phosphoserine (Ser-979). The tract at residues 1104-1192 (VSTGTVLRSP…TKFQPRAETQ (89 aa)) is disordered. Residues 1126 to 1140 (VTSTITITPVTTSST) show a composition bias toward low complexity. Residues 1141 to 1157 (RGTQSVSGQDGSSQRPT) show a composition bias toward polar residues. Residues 1169 to 1180 (AGKPVVAAPGAG) are compositionally biased toward low complexity.

The protein belongs to the FILIP1 family. In terms of assembly, interacts with FLNA. Interacts with RHOD (in GTP-bound form).

The protein localises to the cytoplasm. Its subcellular location is the cytoskeleton. Functionally, by acting through a filamin-A/F-actin axis, it controls the start of neocortical cell migration from the ventricular zone. May be able to induce the degradation of filamin-A. This chain is Filamin-A-interacting protein 1 (Filip1), found in Mus musculus (Mouse).